The primary structure comprises 292 residues: NAD kinase (292 aa).

Asp-73 serves as the catalytic Proton acceptor. NAD(+)-binding positions include 73–74 (DG), 147–148 (NE), His-158, Arg-175, Asp-177, 188–193 (TAYSLS), and Gln-247.

Belongs to the NAD kinase family. It depends on a divalent metal cation as a cofactor.

Its subcellular location is the cytoplasm. The catalysed reaction is NAD(+) + ATP = ADP + NADP(+) + H(+). Involved in the regulation of the intracellular balance of NAD and NADP, and is a key enzyme in the biosynthesis of NADP. Catalyzes specifically the phosphorylation on 2'-hydroxyl of the adenosine moiety of NAD to yield NADP. The protein is NAD kinase of Edwardsiella ictaluri (strain 93-146).